The primary structure comprises 123 residues: Fluoride-specific ion channel FluC (123 aa).

4 consecutive transmembrane segments (helical) span residues 4–24, 31–51, 64–83, and 100–120; these read VYIAIFGALGCLSRFMVSGWV, ALPYGTLAVNVIGSLLLGLLM, IRMGITTGFMGGFTTFSTFS, and ANILLNVTVSVVFAGLGIFLA. Na(+) is bound by residues glycine 74 and threonine 77.

This sequence belongs to the fluoride channel Fluc/FEX (TC 1.A.43) family.

It is found in the cell inner membrane. It carries out the reaction fluoride(in) = fluoride(out). With respect to regulation, na(+) is not transported, but it plays an essential structural role and its presence is essential for fluoride channel function. Functionally, fluoride-specific ion channel. Important for reducing fluoride concentration in the cell, thus reducing its toxicity. The chain is Fluoride-specific ion channel FluC from Syntrophotalea carbinolica (strain DSM 2380 / NBRC 103641 / GraBd1) (Pelobacter carbinolicus).